A 451-amino-acid polypeptide reads, in one-letter code: Medium-chain fatty acid ethyl ester synthase/esterase 2 (451 aa).

Residue Lys-114 forms a Glycyl lysine isopeptide (Lys-Gly) (interchain with G-Cter in ubiquitin) linkage. The AB hydrolase-1 domain maps to Pro-166 to Asp-430. Residues Ser-247, Asp-395, and His-423 each act as charge relay system in the active site.

This sequence belongs to the AB hydrolase superfamily. AB hydrolase 4 family.

It catalyses the reaction an aliphatic alcohol + acetyl-CoA = an acetyl ester + CoA. Displays enzymatic activity both for medium-chain fatty acid (MCFA) ethyl ester synthesis and hydrolysis (esterase activity). MCFA are toxic for yeast and this enzyme could thus be involved in their detoxification by esterification. This chain is Medium-chain fatty acid ethyl ester synthase/esterase 2 (EHT1), found in Saccharomyces cerevisiae (strain ATCC 204508 / S288c) (Baker's yeast).